We begin with the raw amino-acid sequence, 289 residues long: Probable protein phosphatase 2C 39 (289 aa).

Residues 41–288 form the PPM-type phosphatase domain; that stretch reads THGFHLVKGK…DDISVVVVKF (248 aa). Positions 78, 79, 240, and 279 each coordinate Mn(2+).

The protein belongs to the PP2C family. The cofactor is Mg(2+). Requires Mn(2+) as cofactor.

It catalyses the reaction O-phospho-L-seryl-[protein] + H2O = L-seryl-[protein] + phosphate. The enzyme catalyses O-phospho-L-threonyl-[protein] + H2O = L-threonyl-[protein] + phosphate. The sequence is that of Probable protein phosphatase 2C 39 from Arabidopsis thaliana (Mouse-ear cress).